Here is a 236-residue protein sequence, read N- to C-terminus: Probable metal transport system ATP-binding protein TC_0697 (236 aa).

Positions 5-236 (LILENVSFRY…FCCNTFGKCS (232 aa)) constitute an ABC transporter domain. 39-46 (GPNGGGKT) provides a ligand contact to ATP.

The protein belongs to the ABC transporter superfamily.

The protein localises to the cell inner membrane. In terms of biological role, part of an ATP-driven transport system TC_0696/TC_0697/TC_0698 for a metal. Probably responsible for energy coupling to the transport system. This Chlamydia muridarum (strain MoPn / Nigg) protein is Probable metal transport system ATP-binding protein TC_0697.